Here is a 340-residue protein sequence, read N- to C-terminus: Uroporphyrinogen decarboxylase (340 aa).

Residues 23–27, aspartate 72, tyrosine 147, threonine 202, and histidine 316 each bind substrate; that span reads RQAGR.

Belongs to the uroporphyrinogen decarboxylase family. As to quaternary structure, homodimer.

Its subcellular location is the cytoplasm. The catalysed reaction is uroporphyrinogen III + 4 H(+) = coproporphyrinogen III + 4 CO2. It functions in the pathway porphyrin-containing compound metabolism; protoporphyrin-IX biosynthesis; coproporphyrinogen-III from 5-aminolevulinate: step 4/4. Functionally, catalyzes the decarboxylation of four acetate groups of uroporphyrinogen-III to yield coproporphyrinogen-III. This is Uroporphyrinogen decarboxylase from Pelobacter propionicus (strain DSM 2379 / NBRC 103807 / OttBd1).